The sequence spans 849 residues: Putative pentatricopeptide repeat-containing protein At5g08490 (849 aa).

20 PPR repeats span residues 20–54 (DHRV…GHIA), 55–89 (CSEV…DPVV), 121–155 (SSVT…GLEK), 156–187 (DTLV…IADK), 188–222 (DVVS…PTEP), 223–260 (NYAT…SWLQ), 262–296 (HVFV…DLVS), 297–327 (WNVV…GDVS), 329–363 (DSVT…SYLL), 365–399 (DTSV…DIIS), 400–430 (WNAI…AITL), 431–465 (DSVT…GLLH), 469–499 (EPKL…LSER), 501–531 (TLVS…MSTT), 532–566 (DLTT…GMRP), 567–597 (NTVT…IIRG), 601–631 (DIRL…DARR), 632–666 (DLVM…NIKP), 667–702 (DHVF…GMKP), and 703–733 (TMEQ…MPVE). A type E motif region spans residues 738-813 (IWGTLLRACT…PAGCSWLEVD (76 aa)). Residues 814–844 (GQRNVFVSGDCSHPRRDSIFDLVNALYLQMK) form a type E(+) motif region.

It belongs to the PPR family. PCMP-E subfamily.

In Arabidopsis thaliana (Mouse-ear cress), this protein is Putative pentatricopeptide repeat-containing protein At5g08490 (PCMP-E32).